The sequence spans 385 residues: Non-structural maintenance of chromosomes element 4 homolog A (385 aa).

The disordered stretch occupies residues 1-69; that stretch reads MSGDSSGRGP…PSDSGDEMMD (69 aa). Composition is skewed to basic and acidic residues over residues 10–21 and 42–55; these read PEGRGRGRDPHR and SARE…RPSL. The span at 56–68 shows a compositional bias: acidic residues; sequence EDTEPSDSGDEMM. T345 is modified (phosphothreonine). S377 is modified (phosphoserine).

It belongs to the NSE4 family. As to quaternary structure, component of the SMC5-SMC6 complex which consists at least of SMC5, SMC6, NSMCE2, NSMCE1, NSMCE4A or EID3 and NSMCE3. NSMCE1, NSMCE4A or EID3 and NSMCE3 probably form a subcomplex that bridges the head domains of the SMC5:SMC6 heterodimer. Interacts with NSMCE3.

Its subcellular location is the nucleus. The protein resides in the chromosome. It localises to the telomere. In terms of biological role, component of the SMC5-SMC6 complex, a complex involved in DNA double-strand breaks by homologous recombination. The complex may promote sister chromatid homologous recombination by recruiting the SMC1-SMC3 cohesin complex to double-strand breaks. The complex is required for telomere maintenance via recombination in ALT (alternative lengthening of telomeres) cell lines and mediates sumoylation of shelterin complex (telosome) components which is proposed to lead to shelterin complex disassembly in ALT-associated PML bodies (APBs). Is involved in positive regulation of response to DNA damage stimulus. The chain is Non-structural maintenance of chromosomes element 4 homolog A (NSMCE4A) from Homo sapiens (Human).